A 119-amino-acid chain; its full sequence is MPRVKRGVTARARHKKVLALSKGFRGRRGNVFRIAKQAVMKAGQYAYRDRRAKKRVFRRLWIARINAAARELGLTYSQFANGLKKAAIEIDRKMLADIAVHDKAAFSSIVDQVKAKLAA.

It belongs to the bacterial ribosomal protein bL20 family.

Its function is as follows. Binds directly to 23S ribosomal RNA and is necessary for the in vitro assembly process of the 50S ribosomal subunit. It is not involved in the protein synthesizing functions of that subunit. The protein is Large ribosomal subunit protein bL20 of Delftia acidovorans (strain DSM 14801 / SPH-1).